The following is a 392-amino-acid chain: MTATAPITQDVRTFPRKLPDGPVNLIGLTRDGLRAALIEAGTPEKQAKMRTGQIWQWLYQKGVRDFASMTNLSKDYRAMLAETFVADVPEVVSRQVSADGTRKYLVRIAGGHEVEVVYIPEVDRGTLCISSQVGCTLTCSFCHTGTQKLVRNLTAGEIIGQVMLARDDLDEWVPTGEGSDAKPRLVSNIVLMGMGEPLYNFENVRDAMKIAMDPEGISLSRRRITLSTSGVVPEIAKTAQEIGCQLAVSFHATTDDVRDKLVPINKRWPIADLLDALRDYPRVSNSERITFEYVMLKDVNDSDADARRLVQLIKGIPAKINLIPFNEWPGAPYERSDWARIEAFADIIYKAGYASPIRTPRGEDIMAACGQLKSATERARKSRKQIEAEAGL.

The active-site Proton acceptor is E115. One can recognise a Radical SAM core domain in the interval 121 to 358 (EVDRGTLCIS…YKAGYASPIR (238 aa)). C128 and C369 are oxidised to a cystine. Residues C135, C139, and C142 each coordinate [4Fe-4S] cluster. Residues 195–196 (GE), S227, 249–251 (SFH), and N326 each bind S-adenosyl-L-methionine. C369 (S-methylcysteine intermediate) is an active-site residue.

It belongs to the radical SAM superfamily. RlmN family. The cofactor is [4Fe-4S] cluster.

It is found in the cytoplasm. The catalysed reaction is adenosine(2503) in 23S rRNA + 2 reduced [2Fe-2S]-[ferredoxin] + 2 S-adenosyl-L-methionine = 2-methyladenosine(2503) in 23S rRNA + 5'-deoxyadenosine + L-methionine + 2 oxidized [2Fe-2S]-[ferredoxin] + S-adenosyl-L-homocysteine. It carries out the reaction adenosine(37) in tRNA + 2 reduced [2Fe-2S]-[ferredoxin] + 2 S-adenosyl-L-methionine = 2-methyladenosine(37) in tRNA + 5'-deoxyadenosine + L-methionine + 2 oxidized [2Fe-2S]-[ferredoxin] + S-adenosyl-L-homocysteine. In terms of biological role, specifically methylates position 2 of adenine 2503 in 23S rRNA and position 2 of adenine 37 in tRNAs. m2A2503 modification seems to play a crucial role in the proofreading step occurring at the peptidyl transferase center and thus would serve to optimize ribosomal fidelity. In Jannaschia sp. (strain CCS1), this protein is Dual-specificity RNA methyltransferase RlmN.